The primary structure comprises 338 residues: Anthranilate phosphoribosyltransferase (338 aa).

Residues Gly78, 81-82 (GD), Thr86, 88-91 (NIST), 106-114 (KHGNRSVSS), and Ser118 contribute to the 5-phospho-alpha-D-ribose 1-diphosphate site. Gly78 contributes to the anthranilate binding site. Ser90 contacts Mg(2+). Asn109 serves as a coordination point for anthranilate. Arg164 serves as a coordination point for anthranilate. 2 residues coordinate Mg(2+): Asp223 and Glu224.

It belongs to the anthranilate phosphoribosyltransferase family. As to quaternary structure, homodimer. It depends on Mg(2+) as a cofactor.

It catalyses the reaction N-(5-phospho-beta-D-ribosyl)anthranilate + diphosphate = 5-phospho-alpha-D-ribose 1-diphosphate + anthranilate. It participates in amino-acid biosynthesis; L-tryptophan biosynthesis; L-tryptophan from chorismate: step 2/5. Catalyzes the transfer of the phosphoribosyl group of 5-phosphorylribose-1-pyrophosphate (PRPP) to anthranilate to yield N-(5'-phosphoribosyl)-anthranilate (PRA). The protein is Anthranilate phosphoribosyltransferase of Bacillus licheniformis (strain ATCC 14580 / DSM 13 / JCM 2505 / CCUG 7422 / NBRC 12200 / NCIMB 9375 / NCTC 10341 / NRRL NRS-1264 / Gibson 46).